Consider the following 847-residue polypeptide: MSETETMNVNGPQDFYSDSPFCLEASFSSSDLLQNETKNVKRGNESVHMSSEDILSTEGSLLGDINLGNYPERIQNQPANTRVSSSRQFEPICKFHWIDAFNDDSSVPDLTRAFSYSEEKPELQSQVYNDPADASQKPDPLKEESLMESSTSENKDELVHEPVRKSRSLCLNHYRGKTRPLTETPLVRSVVVDVALNNNQPESFLGKENVCRNGENLSDSENCFDQLDLRAIYKAGKPEVSSKGIQNSGEFSDMSVGPQEEVTEDGLDSLAITSPWSPAGIFKGRRSQDDFQMPDGELDFESLEPLEEDMALNEALQKLKQTNKKQELQIQDLHGRNLTLESRVQELQTKVSKQHVLLDIINKLKVNVEELIDDKYNVILEKNDINKKLQDLQETSANTKKHLQESKKDQESLQLQVKKIKVHYVRLQERYIAEIQQKNRSVTQCLEIEKTLSKKDEELQRLQRHKGELEKATSSALDLLKREKEIREQEFLSFQEEFQRREKENLKERRKLKSRVEKLVAQVKSLLFTCESERAQTTALQQQVDALRLENLELRQQAAKREAQACTPSFEIIQPKEKLEEVVEPDVTQDTKGTHCNLFLNCSSCKENPELPSMKRTSPLTSRLHSLLALTIGLLTCQDLAIPDTELRQESKKANDIMLQRLKDCQLRKKDLDKELLKHRNRIATLKELIANEKALQDHTMEITDFDTEEVKNASEAPVLLTVKLDKYHSLNEELDFLITKLGDLLESKEDHYSRLIEENDKYRRHVGSLINKVTSYEEIIKCADQRLEISHSQIAHLEERNRHLEDLIRMPREKARGLRPRLDNHPKSMTLISHLEGHHKECSISM.

Residues 118 to 161 (EEKPELQSQVYNDPADASQKPDPLKEESLMESSTSENKDELVHE) are disordered. Residues 377 to 567 (NVILEKNDIN…AAKREAQACT (191 aa)) adopt a coiled-coil conformation.

This chain is Cancer-associated gene 1 protein homolog (Cage1), found in Rattus norvegicus (Rat).